A 425-amino-acid polypeptide reads, in one-letter code: 5-aminovalerate aminotransferase DavT (425 aa).

Residues 112–113 (GS), Tyr139, and 240–243 (DEVQ) contribute to the pyridoxal 5'-phosphate site. Position 269 is an N6-(pyridoxal phosphate)lysine (Lys269). Thr298 provides a ligand contact to pyridoxal 5'-phosphate.

The protein belongs to the class-III pyridoxal-phosphate-dependent aminotransferase family. The cofactor is pyridoxal 5'-phosphate.

It carries out the reaction 5-aminopentanoate + 2-oxoglutarate = 5-oxopentanoate + L-glutamate. Functionally, catalyzes the conversion of 5-aminovalerate to 5-oxopentanoate. In Pseudomonas putida (strain ATCC 47054 / DSM 6125 / CFBP 8728 / NCIMB 11950 / KT2440), this protein is 5-aminovalerate aminotransferase DavT (davT).